The primary structure comprises 449 residues: Glutamyl-tRNA reductase (449 aa).

Substrate-binding positions include 58–61 (TCNR), Ser-121, 126–128 (ETQ), and Gln-132. Cys-59 serves as the catalytic Nucleophile. NADP(+) is bound at residue 203-208 (GLGEMA).

Belongs to the glutamyl-tRNA reductase family. Homodimer.

The enzyme catalyses (S)-4-amino-5-oxopentanoate + tRNA(Glu) + NADP(+) = L-glutamyl-tRNA(Glu) + NADPH + H(+). The protein operates within porphyrin-containing compound metabolism; protoporphyrin-IX biosynthesis; 5-aminolevulinate from L-glutamyl-tRNA(Glu): step 1/2. Its function is as follows. Catalyzes the NADPH-dependent reduction of glutamyl-tRNA(Glu) to glutamate 1-semialdehyde (GSA). This Helicobacter pylori (strain ATCC 700392 / 26695) (Campylobacter pylori) protein is Glutamyl-tRNA reductase.